The sequence spans 939 residues: Intimin (939 aa).

Residues 1-41 (MITHGFYARTRHKHKLKKTFIMLSAGLGLFFYVNQNSFANG) form the signal peptide. Positions 40–153 (NGENYFKLGS…KLTKMSPDVT (114 aa)) are peptidoglycan-binding. Residues 40–153 (NGENYFKLGS…KLTKMSPDVT (114 aa)) form a sufficient for homodimerization region. Residues 40–212 (NGENYFKLGS…LQAWLQHYGT (173 aa)) form a required for periplasmic localization region. Positions 63–112 (LFYTLKTGETVADLSKSQDINLSTIWSLNKHLYSSESEMMKAAPGQQIIL) constitute a LysM domain. Positions 189-430 (DTALGIAGNQ…PQYVNELRTL (242 aa)) are inverse autotransporter. Positions 402–411 (LYSMQFRYQF) are signature sequence for beta-barrel assembly machinery (BAM), which recognizes the unfolded beta-barrel in the periplasm. 2 Big-1 domains span residues 560 to 653 (VTDF…VIFV) and 660 to 751 (ITEI…VEFF). The interval 750-939 (FFTTLTIDDG…ESNAYATCVK (190 aa)) is required and sufficient for interaction with intimin receptor Tir. The tract at residues 842-939 (LIVPNMSKRV…ESNAYATCVK (98 aa)) is C-type lectin domain. The tract at residues 842 to 939 (LIVPNMSKRV…ESNAYATCVK (98 aa)) is intimin receptor Tir-binding. Cys860 and Cys937 form a disulfide bridge.

The protein belongs to the intimin/invasin family. In terms of assembly, homodimer. Interacts with Tir.

It localises to the cell outer membrane. Functionally, an inverse autotransporter. Adhesin, which mediates attachment to the human intestine epithelial cells. Necessary for the production of attaching and effacing lesions on infected human tissue culture cells. Anchored to the outer membrane by binding to peptidoglycan (PGN) via its periplasmic domain, thus helping in receptor interactions during host invasion. PGN-binding may also aid in resisting mechanical and chemical stress during transit of the bacterium through the gastrointestinal tract of the host. Periplasmic domain binds purified E.coli PGN sacculi under acidic conditions in vitro and in vivo, but does not bind to chitin. Periplasmic domain binds PGN sacculi with an apparent dissociation constant (Kd) of 0.8 uM. No binding to PGN in vitro at normal physiological pH 7.4. This Escherichia coli O127:H6 (strain E2348/69 / EPEC) protein is Intimin.